The following is a 433-amino-acid chain: 3-phosphoshikimate 1-carboxyvinyltransferase (433 aa).

3 residues coordinate 3-phosphoshikimate: K21, S22, and R26. K21 contacts phosphoenolpyruvate. The phosphoenolpyruvate site is built by G96 and R124. The 3-phosphoshikimate site is built by S167, S168, Q169, S195, D310, and K337. Q169 provides a ligand contact to phosphoenolpyruvate. The active-site Proton acceptor is the D310. Phosphoenolpyruvate-binding residues include R341, R384, and K410.

It belongs to the EPSP synthase family. Monomer.

It is found in the cytoplasm. It catalyses the reaction 3-phosphoshikimate + phosphoenolpyruvate = 5-O-(1-carboxyvinyl)-3-phosphoshikimate + phosphate. It participates in metabolic intermediate biosynthesis; chorismate biosynthesis; chorismate from D-erythrose 4-phosphate and phosphoenolpyruvate: step 6/7. In terms of biological role, catalyzes the transfer of the enolpyruvyl moiety of phosphoenolpyruvate (PEP) to the 5-hydroxyl of shikimate-3-phosphate (S3P) to produce enolpyruvyl shikimate-3-phosphate and inorganic phosphate. This chain is 3-phosphoshikimate 1-carboxyvinyltransferase, found in Clostridium botulinum (strain Eklund 17B / Type B).